Here is a 103-residue protein sequence, read N- to C-terminus: MDPQQKGIVNTCFLTTRIPSWAGARQNVTGSDLGGKPVPSDVLESGRPLAAPRVRTLYEEQQLNMLTVNVILDDLKTQVAAMQNSVTAIQEELKDLKQRVAAR.

Residues 25 to 45 form a disordered region; the sequence is RQNVTGSDLGGKPVPSDVLES. The stretch at 72-99 forms a coiled coil; that stretch reads LDDLKTQVAAMQNSVTAIQEELKDLKQR.

It belongs to the adenoviridae hexon-interlacing protein family. In terms of assembly, homotrimer. Interacts with hexon protein; this interaction tethers the hexons together. Self-interacts with adjacent proteins. Interacts with kinesin light chain KLC1; this interaction leads to capsid disruption at the nuclear pore complex during virus entry into host cell.

The protein resides in the virion. It is found in the host nucleus. Functionally, structural component of the virion that acts as a cement protein on the capsid exterior and forms triskelion structures consisting of three molecules that stabilize three hexon trimers at the center of each icosahedral facet and fixes the peripentonal hexons. Dispensable for assembly. During virus entry, recruits the anterograde motor kinesin-1 to the capsid docked at the nuclear pore complex thereby subjecting the docked capsid to a pulling force. The resulting tension leads to capsid disruption, dispersion of capsid fragments toward cell periphery and eventually viral DNA entry into the host nucleus. In Canine adenovirus serotype 1 (strain CLL) (CAdV-1), this protein is Hexon-interlacing protein.